A 728-amino-acid chain; its full sequence is 1,4-alpha-glucan branching enzyme GlgB (728 aa).

The Nucleophile role is filled by D405. The Proton donor role is filled by E458.

It belongs to the glycosyl hydrolase 13 family. GlgB subfamily. Monomer.

The catalysed reaction is Transfers a segment of a (1-&gt;4)-alpha-D-glucan chain to a primary hydroxy group in a similar glucan chain.. Its pathway is glycan biosynthesis; glycogen biosynthesis. Its function is as follows. Catalyzes the formation of the alpha-1,6-glucosidic linkages in glycogen by scission of a 1,4-alpha-linked oligosaccharide from growing alpha-1,4-glucan chains and the subsequent attachment of the oligosaccharide to the alpha-1,6 position. The sequence is that of 1,4-alpha-glucan branching enzyme GlgB from Shigella flexneri serotype 5b (strain 8401).